The primary structure comprises 113 residues: Hydrogenase maturation factor HypA (113 aa).

Residue His-2 participates in Ni(2+) binding. Zn(2+)-binding residues include Cys-73, Cys-76, Cys-89, and Cys-92.

Belongs to the HypA/HybF family.

Involved in the maturation of [NiFe] hydrogenases. Required for nickel insertion into the metal center of the hydrogenase. The chain is Hydrogenase maturation factor HypA from Methylocella silvestris (strain DSM 15510 / CIP 108128 / LMG 27833 / NCIMB 13906 / BL2).